The chain runs to 151 residues: D-aminoacyl-tRNA deacylase (151 aa).

The Gly-cisPro motif, important for rejection of L-amino acids motif lies at 137–138 (GP).

It belongs to the DTD family. As to quaternary structure, homodimer.

It is found in the cytoplasm. The catalysed reaction is glycyl-tRNA(Ala) + H2O = tRNA(Ala) + glycine + H(+). It carries out the reaction a D-aminoacyl-tRNA + H2O = a tRNA + a D-alpha-amino acid + H(+). Its function is as follows. An aminoacyl-tRNA editing enzyme that deacylates mischarged D-aminoacyl-tRNAs. Also deacylates mischarged glycyl-tRNA(Ala), protecting cells against glycine mischarging by AlaRS. Acts via tRNA-based rather than protein-based catalysis; rejects L-amino acids rather than detecting D-amino acids in the active site. By recycling D-aminoacyl-tRNA to D-amino acids and free tRNA molecules, this enzyme counteracts the toxicity associated with the formation of D-aminoacyl-tRNA entities in vivo and helps enforce protein L-homochirality. This Azoarcus sp. (strain BH72) protein is D-aminoacyl-tRNA deacylase.